Here is a 409-residue protein sequence, read N- to C-terminus: Glutamyl-tRNA(Gln) amidotransferase subunit D (409 aa).

The 323-residue stretch at 68–390 (RKISVLATGG…DLFRDLFRKN (323 aa)) folds into the Asparaginase/glutaminase domain. Catalysis depends on residues Thr78, Thr152, Asp153, and Lys230.

The protein belongs to the asparaginase 1 family. GatD subfamily. As to quaternary structure, heterodimer of GatD and GatE.

The catalysed reaction is L-glutamyl-tRNA(Gln) + L-glutamine + ATP + H2O = L-glutaminyl-tRNA(Gln) + L-glutamate + ADP + phosphate + H(+). Its function is as follows. Allows the formation of correctly charged Gln-tRNA(Gln) through the transamidation of misacylated Glu-tRNA(Gln) in organisms which lack glutaminyl-tRNA synthetase. The reaction takes place in the presence of glutamine and ATP through an activated gamma-phospho-Glu-tRNA(Gln). The GatDE system is specific for glutamate and does not act on aspartate. This Thermoplasma acidophilum (strain ATCC 25905 / DSM 1728 / JCM 9062 / NBRC 15155 / AMRC-C165) protein is Glutamyl-tRNA(Gln) amidotransferase subunit D.